A 115-amino-acid chain; its full sequence is NADH-ubiquinone oxidoreductase chain 3 (115 aa).

3 helical membrane-spanning segments follow: residues 3 to 23, 55 to 75, and 84 to 104; these read FVLI…ITFW, FFLV…LLPL, and LPLM…SLAY.

The protein belongs to the complex I subunit 3 family. In terms of assembly, core subunit of respiratory chain NADH dehydrogenase (Complex I) which is composed of 45 different subunits. Interacts with TMEM186. Interacts with TMEM242.

It is found in the mitochondrion inner membrane. The catalysed reaction is a ubiquinone + NADH + 5 H(+)(in) = a ubiquinol + NAD(+) + 4 H(+)(out). In terms of biological role, core subunit of the mitochondrial membrane respiratory chain NADH dehydrogenase (Complex I) which catalyzes electron transfer from NADH through the respiratory chain, using ubiquinone as an electron acceptor. Essential for the catalytic activity of complex I. The polypeptide is NADH-ubiquinone oxidoreductase chain 3 (Pan paniscus (Pygmy chimpanzee)).